Reading from the N-terminus, the 237-residue chain is NAD(P)H-quinone oxidoreductase subunit K (237 aa).

[4Fe-4S] cluster is bound by residues cysteine 52, cysteine 53, cysteine 117, and cysteine 148.

This sequence belongs to the complex I 20 kDa subunit family. In terms of assembly, NDH-1 can be composed of about 15 different subunits; different subcomplexes with different compositions have been identified which probably have different functions. [4Fe-4S] cluster is required as a cofactor.

The protein localises to the cellular thylakoid membrane. It catalyses the reaction a plastoquinone + NADH + (n+1) H(+)(in) = a plastoquinol + NAD(+) + n H(+)(out). The catalysed reaction is a plastoquinone + NADPH + (n+1) H(+)(in) = a plastoquinol + NADP(+) + n H(+)(out). Its function is as follows. NDH-1 shuttles electrons from an unknown electron donor, via FMN and iron-sulfur (Fe-S) centers, to quinones in the respiratory and/or the photosynthetic chain. The immediate electron acceptor for the enzyme in this species is believed to be plastoquinone. Couples the redox reaction to proton translocation, and thus conserves the redox energy in a proton gradient. Cyanobacterial NDH-1 also plays a role in inorganic carbon-concentration. The protein is NAD(P)H-quinone oxidoreductase subunit K of Thermosynechococcus vestitus (strain NIES-2133 / IAM M-273 / BP-1).